The primary structure comprises 159 residues: Ribosomal RNA large subunit methyltransferase H (159 aa).

Residues leucine 76, glycine 108, and 127-132 (FSKMTL) each bind S-adenosyl-L-methionine.

This sequence belongs to the RNA methyltransferase RlmH family. In terms of assembly, homodimer.

The protein resides in the cytoplasm. It carries out the reaction pseudouridine(1915) in 23S rRNA + S-adenosyl-L-methionine = N(3)-methylpseudouridine(1915) in 23S rRNA + S-adenosyl-L-homocysteine + H(+). Its function is as follows. Specifically methylates the pseudouridine at position 1915 (m3Psi1915) in 23S rRNA. This Bacillus anthracis (strain CDC 684 / NRRL 3495) protein is Ribosomal RNA large subunit methyltransferase H.